The sequence spans 183 residues: Caltractin ICL1f (183 aa).

Residues 1-19 (MARRGQQPPQQQQQAQPAQ) are compositionally biased toward low complexity. Residues 1-30 (MARRGQQPPQQQQQAQPAQKNQAGKFNPAE) are disordered. 4 consecutive EF-hand domains span residues 39–74 (EEVL…LGFE), 75–110 (AKNQ…RISE), 112–147 (DSKA…LGET), and 148–183 (MDDS…KTFA). Ca(2+) is bound by residues Asp52, Asp54, Thr56, Ser58, Glu63, Asp88, Asp90, Ser92, Gln94, and Glu99.

This sequence belongs to the centrin family. Monomer.

It is found in the cytoplasm. The protein localises to the cytoskeleton. Functionally, plays a fundamental role in microtubule organizing center structure and function. Component of the infraciliary lattice (ICL) and the ciliary basal bodies. The sequence is that of Caltractin ICL1f (Icl1f) from Paramecium tetraurelia.